A 300-amino-acid chain; its full sequence is Tyrosine recombinase XerD (300 aa).

A Core-binding (CB) domain is found at 6-89; it reads LFHKRLIEQF…ALKVFFHFLK (84 aa). The region spanning 108–293 is the Tyr recombinase domain; that stretch reads RLPSILSTEE…ASESLIEKFH (186 aa). Residues R152, K174, H245, R248, and H271 contribute to the active site. Residue Y280 is the O-(3'-phospho-DNA)-tyrosine intermediate of the active site.

Belongs to the 'phage' integrase family. XerD subfamily. Forms a cyclic heterotetrameric complex composed of two molecules of XerC and two molecules of XerD.

The protein localises to the cytoplasm. Its function is as follows. Site-specific tyrosine recombinase, which acts by catalyzing the cutting and rejoining of the recombining DNA molecules. The XerC-XerD complex is essential to convert dimers of the bacterial chromosome into monomers to permit their segregation at cell division. It also contributes to the segregational stability of plasmids. The sequence is that of Tyrosine recombinase XerD from Chlamydia trachomatis serovar D (strain ATCC VR-885 / DSM 19411 / UW-3/Cx).